Reading from the N-terminus, the 162-residue chain is MQSWYLLYCKRGQLQRAQEHLERQAVNCLAPMITLEKIVRGKRTAVSEPLFPNYLFVEFDPEVIHTTTINATRGVSHFVRFGASPAIVPSAVIHQLSVYKPKDIVDPATPYPGDKVIITEGAFEGFQAIFTEPDGEARSMLLLNLINKEIKHSVKNTEFRKL.

It belongs to the RfaH family. Interacts with both the nontemplate DNA and the RNA polymerase (RNAP). Monomer in solution.

Enhances distal genes transcription elongation in a specialized subset of operons that encode extracytoplasmic components. RfaH is recruited into a multi-component RNA polymerase complex by the ops element, which is a short conserved DNA sequence located downstream of the main promoter of these operons. Once bound, RfaH suppresses pausing and inhibits Rho-dependent and intrinsic termination at a subset of sites. Termination signals are bypassed, which allows complete synthesis of long RNA chains. Enhances expression of several operons involved in synthesis of lipopolysaccharides, exopolysaccharides, hemolysin, and sex factor. Also negatively controls expression and surface presentation of AG43 and possibly another AG43-independent factor that mediates cell-cell interactions and biofilm formation. This chain is Transcription antitermination protein RfaH, found in Escherichia coli (strain K12).